Reading from the N-terminus, the 700-residue chain is Kin of IRRE-like protein 2 (700 aa).

Positions 1 to 19 (MLASALLVFLCCFKGHAGS) are cleaved as a signal peptide. The Extracellular portion of the chain corresponds to 20-507 (SPHFLQQPED…GRRDLLPTVR (488 aa)). 5 consecutive Ig-like C2-type domains span residues 21 to 115 (PHFL…AQLH), 120 to 219 (PEAP…VTLS), 224 to 304 (PMVT…TALE), 309 to 391 (PILQ…ARLT), and 395 to 497 (PPVV…QIHL). The cysteines at positions 42 and 100 are disulfide-linked. An N-linked (GlcNAc...) asparagine glycan is attached at Asn140. Disulfide bonds link Cys143-Cys201 and Cys245-Cys288. Positions 146–148 (RGD) match the Cell attachment site motif. A glycan (N-linked (GlcNAc...) asparagine) is linked at Asn298. 2 disulfide bridges follow: Cys330-Cys372 and Cys416-Cys482. N-linked (GlcNAc...) asparagine glycosylation occurs at Asn481. A helical transmembrane segment spans residues 508-528 (IVAGAASAATSLLMVITGVVL). Residues 529-700 (CCWRHGSLSK…PSHQRLQTHV (172 aa)) lie on the Cytoplasmic side of the membrane. The segment at 542-576 (LVRIPGSSEGSSSRGPEEETGSSEDRGPIVHTDHS) is disordered. The residue at position 563 (Ser563) is a Phosphoserine. Over residues 564 to 576 (SEDRGPIVHTDHS) the composition is skewed to basic and acidic residues. Residues Tyr595, Tyr596, and Tyr653 each carry the phosphotyrosine modification. Positions 671 to 700 (FGPPELSSGTPPFPYATLSPPSHQRLQTHV) are disordered. The segment covering 689-700 (SPPSHQRLQTHV) has biased composition (polar residues).

Belongs to the immunoglobulin superfamily. Homodimer. Interacts with NPHS2/podocin (via the C-terminus). Interacts with NPHS1 (via the Ig-like domains). Interacts with FYN. N-glycosylated. Post-translationally, phosphorylated at Ser-548 or Ser-549; due to site ambiguity, the exact position of the serine phosphorylation could not be determined. Phosphorylation at residues Tyr-631 and/or Tyr-632. FYN mediates tyrosine phosphorylation in pancreatic beta-cells. In terms of processing, the extracellular domain is cleaved leading to the generation of a soluble fragment and a membrane-bound C-terminal fragment, which is further cleaved by gamma-secretase. Highly expressed in beta-cells of the pancreatic islets. Expression is seen in podocytes of kidney glomeruli, and in the cerebellum and hindbrain at 12.5 dpc, in the spinal cord at 10.5 dpc, and in retina and hypothalamus at 13.5 dpc.

It is found in the cell membrane. Its function is as follows. May regulate basal insulin secretion. The protein is Kin of IRRE-like protein 2 (Kirrel2) of Mus musculus (Mouse).